A 255-amino-acid polypeptide reads, in one-letter code: 5'-nucleotidase SurE (255 aa).

Asp8, Asp9, Ser39, and Asn95 together coordinate a divalent metal cation.

Belongs to the SurE nucleotidase family. The cofactor is a divalent metal cation.

It is found in the cytoplasm. It catalyses the reaction a ribonucleoside 5'-phosphate + H2O = a ribonucleoside + phosphate. In terms of biological role, nucleotidase that shows phosphatase activity on nucleoside 5'-monophosphates. In Thermosipho africanus (strain TCF52B), this protein is 5'-nucleotidase SurE.